Here is a 464-residue protein sequence, read N- to C-terminus: Protein FAM90A5 (464 aa).

3 disordered regions span residues 16–42 (RAQT…DPRL), 70–389 (PATL…HDGA), and 415–437 (HSPE…SEAP). 2 stretches are compositionally biased toward basic and acidic residues: residues 74–89 (GKKE…KPRV) and 97–114 (NKDK…DPQR). Positions 180–197 (LASLSPLRKASLSSSSSL) are enriched in low complexity.

Belongs to the FAM90 family.

In Homo sapiens (Human), this protein is Protein FAM90A5.